Here is a 262-residue protein sequence, read N- to C-terminus: Phosphate import ATP-binding protein PstB (262 aa).

Residues 16–257 (IDVRNLNFYY…PHRKETEDYI (242 aa)) enclose the ABC transporter domain. ATP is bound at residue 48-55 (GPSGCGKS).

It belongs to the ABC transporter superfamily. Phosphate importer (TC 3.A.1.7) family. The complex is composed of two ATP-binding proteins (PstB), two transmembrane proteins (PstC and PstA) and a solute-binding protein (PstS).

It is found in the cell inner membrane. The enzyme catalyses phosphate(out) + ATP + H2O = ADP + 2 phosphate(in) + H(+). Part of the ABC transporter complex PstSACB involved in phosphate import. Responsible for energy coupling to the transport system. This Cupriavidus metallidurans (strain ATCC 43123 / DSM 2839 / NBRC 102507 / CH34) (Ralstonia metallidurans) protein is Phosphate import ATP-binding protein PstB.